The chain runs to 554 residues: (Z)-gamma-bisabolene synthase 2 (554 aa).

Mg(2+) is bound by residues Asp306, Asp310, Asp450, and Asp458. The short motif at 306–310 (DDACD) is the DDXXD motif element.

The protein belongs to the terpene synthase family. Tpsa subfamily. Mg(2+) serves as cofactor. Requires Mn(2+) as cofactor. Predominantly expressed in roots. Expressed in the cortex and the sub-epidermal layers of roots. Also detected in leaf hydathodes and flower stigmata.

The protein resides in the cytoplasm. The enzyme catalyses (2E,6E)-farnesyl diphosphate = (Z)-gamma-bisabolene + diphosphate. It participates in secondary metabolite biosynthesis; terpenoid biosynthesis. Involved in sesquiterpene (C15) biosynthesis. The major product is (Z)-gamma-bisabolene with minor amounts of (E)-nerolidol and alpha-bisabolol. The polypeptide is (Z)-gamma-bisabolene synthase 2 (TPS13) (Arabidopsis thaliana (Mouse-ear cress)).